Here is a 686-residue protein sequence, read N- to C-terminus: Translation initiation factor IF-2 (686 aa).

The disordered stretch occupies residues 54 to 105; that stretch reads KPSVADEFEVEEKVVRSKKNSNKKKKKGKGNEDKRQENFAGRQQTQTVETPD. Residues 69 to 81 show a composition bias toward basic residues; that stretch reads RSKKNSNKKKKKG. Residues 188-357 enclose the tr-type G domain; the sequence is ERPAVVTIMG…LLVSEVEEYK (170 aa). A G1 region spans residues 197-204; the sequence is GHVDHGKT. Position 197-204 (197-204) interacts with GTP; sequence GHVDHGKT. The segment at 222-226 is G2; sequence GITQH. Positions 243-246 are G3; sequence DTPG. GTP-binding positions include 243–247 and 297–300; these read DTPGH and NKMD. Positions 297 to 300 are G4; that stretch reads NKMD. Residues 333 to 335 are G5; sequence SAI.

Belongs to the TRAFAC class translation factor GTPase superfamily. Classic translation factor GTPase family. IF-2 subfamily.

It localises to the cytoplasm. Its function is as follows. One of the essential components for the initiation of protein synthesis. Protects formylmethionyl-tRNA from spontaneous hydrolysis and promotes its binding to the 30S ribosomal subunits. Also involved in the hydrolysis of GTP during the formation of the 70S ribosomal complex. This chain is Translation initiation factor IF-2, found in Bacillus cereus (strain AH187).